A 268-amino-acid chain; its full sequence is Fibroblast growth factor 5 (268 aa).

Positions 1 to 20 are cleaved as a signal peptide; it reads MSLSFLLLLFFSHLILSAWA. Residues 26 to 81 form a disordered region; the sequence is LAPKGQPGPAATDRNPRGSSSRQSSSSAMSSSSASSSPAASLGSQGSGLEQSSFQW. A compositionally biased stretch (low complexity) spans 43–80; it reads GSSSRQSSSSAMSSSSASSSPAASLGSQGSGLEQSSFQ. Asn-110 is a glycosylation site (N-linked (GlcNAc...) asparagine). Residues 233–255 form a disordered region; it reads VPEKKKPPSPIKPKIPLSAPRKN.

It belongs to the heparin-binding growth factors family. Interacts with FGFR1 and FGFR2. Affinity between fibroblast growth factors (FGFs) and their receptors is increased by heparan sulfate glycosaminoglycans that function as coreceptors. As to expression, expressed in neonatal brain.

It localises to the secreted. Plays an important role in the regulation of cell proliferation and cell differentiation. Required for normal regulation of the hair growth cycle. Functions as an inhibitor of hair elongation by promoting progression from anagen, the growth phase of the hair follicle, into catagen the apoptosis-induced regression phase. This is Fibroblast growth factor 5 (FGF5) from Homo sapiens (Human).